Consider the following 656-residue polypeptide: MFARRLRGAGSLAAASLARWQSSKVTGDVIGIDLGTTYSCVAVMEGDKPRVLENTEGFRATPSVVAFKGQEKLVGLAAKRQAVTNPQSTFFAVKRLIGRRFEDSNIQHDIKNVPYKIGRSSNGDAWVQDANGKQYSPSQVGAFVLEKMKETAENFLGRKVSNAVVTCPAYFNGPQRQATKDAGTIAGLNVIRVVNGPTAAALAYGLDKTKDSMIAVYDLGGGTFDISVLEIAGGVFEVKATNGDTHLGGEDFDLCLSDYILTEFKKSTGIDLSNERMALQRIREAAEKAKCELSTTMETEVNLPFITANQDGAQHVQMTVSRSKFESLAEKLVQRSLGPCKQCIKDAAVDLKEISEVVLVGGMTRMPKVIEAVKQFFGRDPFRGVNPDEAVALGGATLGGVLRRDVKGLVLLDVTPLSLGVETLGGVFTRMIPKNTTIPTKKSQTFFSTAAFNQTQVGIKVFQGEREMAADNQMMGQFDLVGIPPAPRGVPQIEVTFDIEPNGICHVTAKDKATGKTQNITITASGGLSKEQIERMIRDSESHAESDRLKRELVEVRNNAETQANTAERQLTEWKYVSDAEKENVRTLLRACRKSMENPNVTKDELSAATDKLQKAVMECGRTEYQQAAAGNSSSSSGNTDSSQGEQQQQGDQQKQ.

The transit peptide at 1 to 23 (MFARRLRGAGSLAAASLARWQSS) directs the protein to the mitochondrion. Residues 624–656 (EYQQAAAGNSSSSSGNTDSSQGEQQQQGDQQKQ) are disordered. The segment covering 626–656 (QQAAAGNSSSSSGNTDSSQGEQQQQGDQQKQ) has biased composition (low complexity).

This sequence belongs to the heat shock protein 70 family.

The protein localises to the mitochondrion matrix. It is found in the kinetoplast. Functionally, may participate in eukaryotic mitochondrial DNA replication. This Trypanosoma cruzi protein is Heat shock 70 kDa protein, mitochondrial (MTP70).